The primary structure comprises 394 residues: Large ribosomal subunit protein mL44 (394 aa).

The transit peptide at 1 to 21 (MFRHVAQNLGSRNTSIQSYRL) directs the protein to the mitochondrion.

This sequence belongs to the ribonuclease III family. Mitochondrion-specific ribosomal protein mL44 subfamily. Component of the mitochondrial large ribosomal subunit (mt-LSU).

The protein localises to the mitochondrion. Functionally, component of the mitochondrial ribosome. May have a function in the assembly/stability of nascent mitochondrial polypeptides exiting the ribosome. This Caenorhabditis elegans protein is Large ribosomal subunit protein mL44.